The following is a 277-amino-acid chain: Tryptophan synthase alpha chain (277 aa).

Residues E42 and E53 each act as proton acceptor in the active site.

Belongs to the TrpA family. Tetramer of two alpha and two beta chains.

The enzyme catalyses (1S,2R)-1-C-(indol-3-yl)glycerol 3-phosphate + L-serine = D-glyceraldehyde 3-phosphate + L-tryptophan + H2O. The protein operates within amino-acid biosynthesis; L-tryptophan biosynthesis; L-tryptophan from chorismate: step 5/5. In terms of biological role, the alpha subunit is responsible for the aldol cleavage of indoleglycerol phosphate to indole and glyceraldehyde 3-phosphate. This chain is Tryptophan synthase alpha chain, found in Natronomonas pharaonis (strain ATCC 35678 / DSM 2160 / CIP 103997 / JCM 8858 / NBRC 14720 / NCIMB 2260 / Gabara) (Halobacterium pharaonis).